The chain runs to 156 residues: Rhombotin-1 (156 aa).

LIM zinc-binding domains lie at 22-84 (KGCA…LFGT) and 86-148 (GNCA…GQLN).

The protein localises to the nucleus. Functionally, may be involved in gene regulation within neural lineage cells potentially by direct DNA binding or by binding to other transcription factors. The polypeptide is Rhombotin-1 (Xenopus laevis (African clawed frog)).